The primary structure comprises 261 residues: Ribonuclease PH (261 aa).

Residues R86 and 124-126 (GTR) each bind phosphate.

Belongs to the RNase PH family. In terms of assembly, homohexameric ring arranged as a trimer of dimers.

The catalysed reaction is tRNA(n+1) + phosphate = tRNA(n) + a ribonucleoside 5'-diphosphate. Phosphorolytic 3'-5' exoribonuclease that plays an important role in tRNA 3'-end maturation. Removes nucleotide residues following the 3'-CCA terminus of tRNAs; can also add nucleotides to the ends of RNA molecules by using nucleoside diphosphates as substrates, but this may not be physiologically important. Probably plays a role in initiation of 16S rRNA degradation (leading to ribosome degradation) during starvation. The sequence is that of Ribonuclease PH from Persephonella marina (strain DSM 14350 / EX-H1).